A 131-amino-acid chain; its full sequence is Sirohydrochlorin cobaltochelatase (131 aa).

Catalysis depends on histidine 12, which acts as the Proton acceptor. Histidine 12 and histidine 78 together coordinate Co(2+). The Ni(2+) site is built by histidine 12 and histidine 78. Residue 73–78 (LASGVH) participates in substrate binding.

This sequence belongs to the CbiX family. CbiXS subfamily. As to quaternary structure, homotetramer; dimer of dimers.

The catalysed reaction is Co-sirohydrochlorin + 2 H(+) = sirohydrochlorin + Co(2+). The enzyme catalyses Ni-sirohydrochlorin + 2 H(+) = sirohydrochlorin + Ni(2+). Its pathway is cofactor biosynthesis; adenosylcobalamin biosynthesis; cob(II)yrinate a,c-diamide from sirohydrochlorin (anaerobic route): step 1/10. Functionally, catalyzes the insertion of Co(2+) into sirohydrochlorin as part of the anaerobic pathway to cobalamin biosynthesis. Involved in the biosynthesis of the unique nickel-containing tetrapyrrole coenzyme F430, the prosthetic group of methyl-coenzyme M reductase (MCR), which plays a key role in methanogenesis and anaerobic methane oxidation. Catalyzes the insertion of Ni(2+) into sirohydrochlorin to yield Ni-sirohydrochlorin. In Methanococcoides burtonii (strain DSM 6242 / NBRC 107633 / OCM 468 / ACE-M), this protein is Sirohydrochlorin cobaltochelatase.